The primary structure comprises 291 residues: MEFSRPPLVHVKGIPLIKYFAETIGPLQNFTAWPDDLLISTYPKSGTTWMSEILDMIYQGGKLEKCGRAPIYARVPFLEFKCPGVPSGLETLEETPAPRLLKTHLPLSLLPQSLLDQKVKVIYIARNAKDVVVSYYNFYNMAKLHPDPGTWDSFLENFMDGEVSYGSWYQHVKEWWELRHTHPVLYLFYEDIKENPKREIKKILEFLGRSLPEETVDSIVHHTSFKKMKENCMTNYTTIPTEIMDHNVSPFMRKGTTGDWKNTFTVAQNERFDAHYAKTMTDCDFKFRCEL.

44 to 49 (KSGTTW) is a binding site for 3'-phosphoadenylyl sulfate. 102–104 (KTH) is a substrate binding site. The active-site Proton acceptor is the H104. 3'-phosphoadenylyl sulfate-binding positions include R126, S134, Y189, 223 to 228 (TSFKKM), and 251 to 255 (FMRKG). At S134 the chain carries Phosphoserine.

Belongs to the sulfotransferase 1 family. Homodimer. Post-translationally, the N-terminus is blocked. Liver, kidney, heart and colon.

Its subcellular location is the cytoplasm. The enzyme catalyses a phenol + 3'-phosphoadenylyl sulfate = an aryl sulfate + adenosine 3',5'-bisphosphate + H(+). The catalysed reaction is 17beta-estradiol + 3'-phosphoadenylyl sulfate = 17beta-estradiol 3-sulfate + adenosine 3',5'-bisphosphate + H(+). It carries out the reaction 4-ethylphenol + 3'-phosphoadenylyl sulfate = 4-ethylphenyl sulfate + adenosine 3',5'-bisphosphate + H(+). It catalyses the reaction 4-nitrophenol + 3'-phosphoadenylyl sulfate = 4-nitrophenyl sulfate + adenosine 3',5'-bisphosphate. The enzyme catalyses dopamine + 3'-phosphoadenylyl sulfate = dopamine 3-O-sulfate + adenosine 3',5'-bisphosphate + H(+). The catalysed reaction is dopamine + 3'-phosphoadenylyl sulfate = dopamine 4-O-sulfate + adenosine 3',5'-bisphosphate + H(+). It carries out the reaction 3,3',5-triiodo-L-thyronine + 3'-phosphoadenylyl sulfate = 3,3',5-triiodo-L-thyronine sulfate + adenosine 3',5'-bisphosphate + H(+). It catalyses the reaction 3,3',5'-triiodo-L-thyronine + 3'-phosphoadenylyl sulfate = 3,3',5'-triiodo-L-thyronine sulfate + adenosine 3',5'-bisphosphate + H(+). The enzyme catalyses 3,3'-diiodo-L-thyronine + 3'-phosphoadenylyl sulfate = 3,3'-diiodo-L-thyronine sulfate + adenosine 3',5'-bisphosphate + H(+). The catalysed reaction is L-thyroxine + 3'-phosphoadenylyl sulfate = L-thyroxine sulfate + adenosine 3',5'-bisphosphate + H(+). Functionally, sulfotransferase that utilizes 3'-phospho-5'-adenylyl sulfate (PAPS) as sulfonate donor to catalyze the sulfate conjugation of a wide variety of acceptor molecules bearing a hydroxyl or an amine group. Sulfonation increases the water solubility of most compounds, and therefore their renal excretion, but it can also result in bioactivation to form active metabolites. Displays broad substrate specificity for small phenolic compounds. Plays an important roles in the sulfonation of endogenous molecules such as steroid hormones. Mediates the sulfate conjugation of a variety of xenobiotics, including the drugs acetaminophen and minoxidil. Mediates also the metabolic activation of carcinogenic N-hydroxyarylamines leading to highly reactive intermediates capable of forming DNA adducts, potentially resulting in mutagenesis. May play a role in gut microbiota-host metabolic interaction. O-sulfonates 4-ethylphenol (4-EP), a dietary tyrosine-derived metabolite produced by gut bacteria. The product 4-EPS crosses the blood-brain barrier and may negatively regulate oligodendrocyte maturation and myelination, affecting the functional connectivity of different brain regions associated with the limbic system. Catalyzes the sulfate conjugation of dopamine. Catalyzes the sulfation of T4 (L-thyroxine/3,5,3',5'-tetraiodothyronine), T3 (3,5,3'-triiodothyronine), rT3 (3,3',5'-triiodothyronine) and 3,3'-T2 (3,3'-diiodothyronine), with a substrate preference of 3,3'-T2 &gt; rT3 &gt; T3 &gt; T4. This Rattus norvegicus (Rat) protein is Sulfotransferase 1A1 (Sult1a1).